The sequence spans 312 residues: Ribosomal RNA small subunit methyltransferase H (312 aa).

Residues 35 to 37, aspartate 55, aspartate 101, and glutamine 108 each bind S-adenosyl-L-methionine; that span reads GGH. Residues 285 to 306 are disordered; sequence ALKPSEHEVTENSRSRSSVLRV. The segment covering 287–298 has biased composition (basic and acidic residues); it reads KPSEHEVTENSR.

This sequence belongs to the methyltransferase superfamily. RsmH family.

It is found in the cytoplasm. It catalyses the reaction cytidine(1402) in 16S rRNA + S-adenosyl-L-methionine = N(4)-methylcytidine(1402) in 16S rRNA + S-adenosyl-L-homocysteine + H(+). In terms of biological role, specifically methylates the N4 position of cytidine in position 1402 (C1402) of 16S rRNA. The polypeptide is Ribosomal RNA small subunit methyltransferase H (Aeromonas salmonicida (strain A449)).